Here is a 964-residue protein sequence, read N- to C-terminus: MAAHLKKRVYEEFTKVVQQQQEEIATKKLRLTKPSKSAALHIDLCKATSPADALQYLLQFARKPVEAESVEGVVRILLEHYYKENDPSVRLKIASLLGLLSKTAGFSPDCIMDDAINILQNEKSHQVLAQLLDTLLAIGSKLPENQATQVRLVDVACKHLTDTSHGVRNKCLQLLGNLGSLEKSVTKDTEGSAARDVQKIIGDHFSDQDPRVRTAAIKAMLQLHERGLKLHQTIYNQACKLLSDDYEQVRSAAVQLIWVVSQLYPESIVPIPSSNEEIRLVDDAFGKICHMVSDGSWVVRVQAAKLLGSMEQVSSHFLEQTLDKKLMSDLRRKRTAHERAKELYSSGEFSSGRKWGDDAPKEEIDTGAVNLIESGACGAFVHGLEDEMYEVRIAAVEALCMLAQSSPSFAEKCLDFLVDMFNDEIEEVRLQSIHTMRKISNNITLREDQLDTVLAVLEDSSRDIREALHELLCCTNVSTKEGIHLALVELLKNLTKYPTDRDSIWKCLKFLGSRHPTLVLPLVPELLSTHPFFDTAEPDMDDPAYIAVLVLIFNAAKTCPTMPALFSDHTLRHYAYLRDSLSHLVPALRLPGRKLVSSTVPSNITPHEDPSQQFLQQSLERVYSVQHLDPQGAQELLEFTIRDLQRLGELQSELAGVADFSATYLQCQLLLIKALQEKLWNVAAPLYLKQSDLASAAAKQIMEETYKMEFMYSGVENKQVVIIQHMRLQAKALQLIVTARTTRGVDPLFGMCEKFLQEVDFFQRCFIADLPHLQDSFVDKLLDLMPRLMASKPVEVIKILQTMLRQSTFLHLPLPEQIHKASATIIEPAGESDNPLRFTSGLVVALDVDATLEHVQDPQNTVKVQVLYPDGQAQMIHPKPADFRNPGPGRHRLLTQVYLSHTAWTEPCQVEVRLLLAYNSGARIPKSPWLEGSEMSPQVETSIEGTIPFSKPVKVYIMPKPARR.

At lysine 27 the chain carries N6-acetyllysine. HEAT repeat units lie at residues alanine 67–phenylalanine 106, glutamine 146–serine 184, glycine 191–lysine 229, leucine 230–tyrosine 264, isoleucine 278–serine 314, asparagine 370–serine 406, proline 407–leucine 445, and glutamate 447–leucine 485. Lysine 792 is covalently cross-linked (Glycyl lysine isopeptide (Lys-Gly) (interchain with G-Cter in SUMO1); alternate). Residue lysine 792 forms a Glycyl lysine isopeptide (Lys-Gly) (interchain with G-Cter in SUMO2); alternate linkage.

The protein belongs to the Integrator subunit 4 family. As to quaternary structure, component of the Integrator complex, composed of core subunits INTS1, INTS2, INTS3, INTS4, INTS5, INTS6, INTS7, INTS8, INTS9/RC74, INTS10, INTS11/CPSF3L, INTS12, INTS13, INTS14 and INTS15. The core complex associates with protein phosphatase 2A subunits PPP2CA and PPP2R1A, to form the Integrator-PP2A (INTAC) complex. INTS4 is part of the RNA endonuclease subcomplex, composed of INTS4, INTS9, INTS11 and inositol hexakisphosphate (InsP6). Interacts with BRAT1; interaction is required for the assembly of the RNA endonuclease subcomplex.

It is found in the nucleus. The protein resides in the cytoplasm. Its function is as follows. Component of the integrator complex, a multiprotein complex that terminates RNA polymerase II (Pol II) transcription in the promoter-proximal region of genes. The integrator complex provides a quality checkpoint during transcription elongation by driving premature transcription termination of transcripts that are unfavorably configured for transcriptional elongation: the complex terminates transcription by (1) catalyzing dephosphorylation of the C-terminal domain (CTD) of Pol II subunit POLR2A/RPB1 and SUPT5H/SPT5, (2) degrading the exiting nascent RNA transcript via endonuclease activity and (3) promoting the release of Pol II from bound DNA. The integrator complex is also involved in terminating the synthesis of non-coding Pol II transcripts, such as enhancer RNAs (eRNAs), small nuclear RNAs (snRNAs), telomerase RNAs and long non-coding RNAs (lncRNAs). Within the integrator complex, INTS4 acts as an scaffold that links INTS9 and INTS11. Mediates recruitment of cytoplasmic dynein to the nuclear envelope, probably as component of the integrator complex. This chain is Integrator complex subunit 4 (Ints4), found in Mus musculus (Mouse).